The primary structure comprises 684 residues: Macrolide export ATP-binding/permease protein MacB (684 aa).

Residues 2–243 (IQLYGLRKDY…RSRLANSRAE (242 aa)) enclose the ABC transporter domain. 38-45 (GSSGSGKT) is a binding site for ATP. The next 5 helical transmembrane spans lie at 248 to 268 (PASA…VLAL), 275 to 295 (TVLT…TMEL), 563 to 583 (LVIA…IMLV), 615 to 635 (VLCV…SVLV), and 644 to 664 (AMSI…GIVF).

Belongs to the ABC transporter superfamily. Macrolide exporter (TC 3.A.1.122) family. As to quaternary structure, homodimer.

Its subcellular location is the cell inner membrane. Functionally, non-canonical ABC transporter that contains transmembrane domains (TMD), which form a pore in the inner membrane, and an ATP-binding domain (NBD), which is responsible for energy generation. Confers resistance against macrolides. The chain is Macrolide export ATP-binding/permease protein MacB from Rhodopirellula baltica (strain DSM 10527 / NCIMB 13988 / SH1).